A 125-amino-acid chain; its full sequence is Small ribosomal subunit protein uS13 (125 aa).

The disordered stretch occupies residues 90–125 (QRHRKGLPVRGQRTKTNARTRKGPKRTVAGKKKATK).

This sequence belongs to the universal ribosomal protein uS13 family. In terms of assembly, part of the 30S ribosomal subunit. Forms a loose heterodimer with protein S19. Forms two bridges to the 50S subunit in the 70S ribosome.

Located at the top of the head of the 30S subunit, it contacts several helices of the 16S rRNA. In the 70S ribosome it contacts the 23S rRNA (bridge B1a) and protein L5 of the 50S subunit (bridge B1b), connecting the 2 subunits; these bridges are implicated in subunit movement. Contacts the tRNAs in the A and P-sites. This Bifidobacterium longum (strain DJO10A) protein is Small ribosomal subunit protein uS13.